Consider the following 187-residue polypeptide: Elongation factor P (187 aa).

Belongs to the elongation factor P family.

The protein localises to the cytoplasm. It functions in the pathway protein biosynthesis; polypeptide chain elongation. Functionally, involved in peptide bond synthesis. Stimulates efficient translation and peptide-bond synthesis on native or reconstituted 70S ribosomes in vitro. Probably functions indirectly by altering the affinity of the ribosome for aminoacyl-tRNA, thus increasing their reactivity as acceptors for peptidyl transferase. This is Elongation factor P from Chelativorans sp. (strain BNC1).